A 449-amino-acid polypeptide reads, in one-letter code: Glutamyl-tRNA reductase (449 aa).

Substrate-binding positions include 49 to 52, S109, 114 to 116, and Q120; these read TCNR and ETQ. The active-site Nucleophile is the C50. 189-194 serves as a coordination point for NADP(+); it reads GAGKMS. The segment at 427–449 is disordered; it reads NFTHPREEMEESDEKRSYCGESR.

This sequence belongs to the glutamyl-tRNA reductase family. Homodimer.

The enzyme catalyses (S)-4-amino-5-oxopentanoate + tRNA(Glu) + NADP(+) = L-glutamyl-tRNA(Glu) + NADPH + H(+). Its pathway is porphyrin-containing compound metabolism; protoporphyrin-IX biosynthesis; 5-aminolevulinate from L-glutamyl-tRNA(Glu): step 1/2. In terms of biological role, catalyzes the NADPH-dependent reduction of glutamyl-tRNA(Glu) to glutamate 1-semialdehyde (GSA). The chain is Glutamyl-tRNA reductase from Carboxydothermus hydrogenoformans (strain ATCC BAA-161 / DSM 6008 / Z-2901).